We begin with the raw amino-acid sequence, 233 residues long: Ras-related protein Rab-20 (233 aa).

The GTP site is built by G17, K18, T19, D32, and T36. Mg(2+) is bound at residue T19. 2 short sequence motifs (switch) span residues 28–41 (RRFP…GGAF) and 55–72 (DTAG…YCRG). Mg(2+) is bound by residues T36 and D55. GTP contacts are provided by G58, N113, K114, and D116. Basic and acidic residues predominate over residues 119 to 130 (SERDTEGGEKEG). The interval 119–138 (SERDTEGGEKEGPASGKVGS) is disordered. The GTP site is built by A183 and K184. S-geranylgeranyl cysteine attachment occurs at residues C231 and C232.

It belongs to the small GTPase superfamily. Rab family. It depends on Mg(2+) as a cofactor. Present in a variety of tissues, but not in brain.

The protein resides in the cytoplasmic vesicle. It is found in the phagosome. The protein localises to the phagosome membrane. It localises to the golgi apparatus. The catalysed reaction is GTP + H2O = GDP + phosphate + H(+). Regulated by guanine nucleotide exchange factors (GEFs) which promote the exchange of bound GDP for free GTP. Regulated by GTPase activating proteins (GAPs) which increase the GTP hydrolysis activity. Inhibited by GDP dissociation inhibitors (GDIs). Functionally, plays a role in apical endocytosis/recycling. Plays a role in the maturation and acidification of phagosomes that engulf pathogens, such as S.aureus and Mycobacterium. Plays a role in the fusion of phagosomes with lysosomes. The sequence is that of Ras-related protein Rab-20 from Mus musculus (Mouse).